The primary structure comprises 65 residues: Large ribosomal subunit protein bL35 (65 aa).

Belongs to the bacterial ribosomal protein bL35 family.

The chain is Large ribosomal subunit protein bL35 from Photorhabdus laumondii subsp. laumondii (strain DSM 15139 / CIP 105565 / TT01) (Photorhabdus luminescens subsp. laumondii).